Reading from the N-terminus, the 150-residue chain is MAKKIIGSLKLQVKAGQANPSPPVGPALGQRGLNIMAFVKEFNAKSADLEPGTPTPVIITYYQDKSFSLELKTPPASFMLKKAAGLAPVGKRNRPKGSTKPGREVAGSVTVAQIRKIAEAKMKDLNANDVEAAMQIILGSAKSCGIEVKG.

The protein belongs to the universal ribosomal protein uL11 family. In terms of assembly, part of the ribosomal stalk of the 50S ribosomal subunit. Interacts with L10 and the large rRNA to form the base of the stalk. L10 forms an elongated spine to which L12 dimers bind in a sequential fashion forming a multimeric L10(L12)X complex. In terms of processing, one or more lysine residues are methylated.

Functionally, forms part of the ribosomal stalk which helps the ribosome interact with GTP-bound translation factors. This is Large ribosomal subunit protein uL11 from Cereibacter sphaeroides (strain KD131 / KCTC 12085) (Rhodobacter sphaeroides).